We begin with the raw amino-acid sequence, 500 residues long: Protein-tyrosine sulfotransferase (500 aa).

An N-terminal signal peptide occupies residues 1–24 (MQMNSVWKLSLGLLLLSSVIGSFA). The Lumenal segment spans residues 25–467 (ELDFGHCETL…SVLGEMGEEK (443 aa)). Active-site residues include R121 and E142. N156, N248, N315, N343, N359, and N395 each carry an N-linked (GlcNAc...) asparagine glycan. A helical membrane pass occupies residues 468–488 (LWKFVPVALMLLLIVLFFLFV). The Cytoplasmic segment spans residues 489–500 (NAKRRRTSKVKI).

Expressed throughout the plant body, highest levels of expression are in the root apical meristem.

It is found in the golgi apparatus membrane. The catalysed reaction is L-tyrosyl-[protein] + 3'-phosphoadenylyl sulfate = O-sulfo-L-tyrosine-[protein] + adenosine 3',5'-bisphosphate + H(+). Functionally, catalyzes the O-sulfation of tyrosine residues within acidic motifs of polypeptides. This is Protein-tyrosine sulfotransferase (TPST) from Arabidopsis thaliana (Mouse-ear cress).